Consider the following 250-residue polypeptide: uncharacterized protein (250 aa).

Disordered regions lie at residues 85–107 (NQFPKQEPQTSTQPVNVQPQSEP) and 158–198 (EPVP…AKVP). Residues 167 to 176 (PAVEQPQVKQ) show a composition bias toward low complexity.

This is an uncharacterized protein from Mycoplasma pneumoniae (strain ATCC 29342 / M129 / Subtype 1) (Mycoplasmoides pneumoniae).